Here is a 201-residue protein sequence, read N- to C-terminus: Casparian strip membrane protein 2 (201 aa).

Over 1–38 the chain is Cytoplasmic; it reads MKSTGEATAINIGETKSASATTVATTKAIQHPKAGLKR. The helical transmembrane segment at 39-59 threads the bilayer; the sequence is GLAIFDFILRLSAIGAALAAT. The Extracellular segment spans residues 60 to 89; that stretch reads TTMGTTDQTLPFFTQFFQFQASYDDLPAFS. The helical transmembrane segment at 90 to 110 threads the bilayer; the sequence is FFVIANAIASGYLFLSLPFSI. Topologically, residues 111–129 are cytoplasmic; it reads VCIVRPHAMGARLLLVICD. The chain crosses the membrane as a helical span at residues 130 to 150; it reads TVMVALTIAAAAAAAAIVYLA. The Extracellular portion of the chain corresponds to 151 to 175; that stretch reads HNGNSNANWVAICQQFDDFCQSVSG. A helical membrane pass occupies residues 176–196; it reads AVVASFIAAVLFMLMIVLSAF. The Cytoplasmic segment spans residues 197–201; that stretch reads SLRKH.

The protein belongs to the Casparian strip membrane proteins (CASP) family. As to quaternary structure, homodimer and heterodimers.

It is found in the cell membrane. In terms of biological role, regulates membrane-cell wall junctions and localized cell wall deposition. Required for establishment of the Casparian strip membrane domain (CSD) and the subsequent formation of Casparian strips, a cell wall modification of the root endodermis that determines an apoplastic barrier between the intraorganismal apoplasm and the extraorganismal apoplasm and prevents lateral diffusion. The chain is Casparian strip membrane protein 2 from Vitis vinifera (Grape).